Consider the following 141-residue polypeptide: Terrelysin (141 aa).

Belongs to the aegerolysin family.

Its subcellular location is the cytoplasm. Its function is as follows. Hemolysins are potential virulence factors. Has hemolytic activity against sheep erythrocytes in vitro. The sequence is that of Terrelysin from Aspergillus terreus (strain NIH 2624 / FGSC A1156).